Consider the following 634-residue polypeptide: Calcium up-regulated protein D (634 aa).

The interval 1–23 is disordered; the sequence is MINIEDISKSSNQSEEKQLKSTS. 2 consecutive Ricin B-type lectin domains span residues 27–146 and 117–250; these read KPKY…WTTF and PGNG…WGIN.

It belongs to the cup family.

It localises to the cytoplasm. It is found in the membrane. Its function is as follows. May play an important role in stabilizing and/or regulating the cell membrane during Ca(2+) stress or certain stages of development. The sequence is that of Calcium up-regulated protein D (cupD) from Dictyostelium discoideum (Social amoeba).